The sequence spans 440 residues: Putative F-box/LRR-repeat protein At5g15620 (440 aa).

The region spanning 1-52 (MDRFSNLPDDVIYHIVSFLSAKEATCLKFVSKNFQNLVTIKRNVVFHHWESF) is the F-box domain. 7 LRR repeats span residues 4-31 (FSNL…KFVS), 126-153 (LKLG…ILDS), 156-181 (FYAS…VIDR), 194-205 (SSPTLKRLTLRR), 210-235 (PEPE…KYKD), 264-289 (YWLN…SIKV), and 318-343 (EADF…TIEG).

This Arabidopsis thaliana (Mouse-ear cress) protein is Putative F-box/LRR-repeat protein At5g15620.